Reading from the N-terminus, the 261-residue chain is Imidazole glycerol phosphate synthase subunit HisF (261 aa).

Residues Asp12 and Asp131 contribute to the active site.

The protein belongs to the HisA/HisF family. Heterodimer of HisH and HisF.

Its subcellular location is the cytoplasm. The enzyme catalyses 5-[(5-phospho-1-deoxy-D-ribulos-1-ylimino)methylamino]-1-(5-phospho-beta-D-ribosyl)imidazole-4-carboxamide + L-glutamine = D-erythro-1-(imidazol-4-yl)glycerol 3-phosphate + 5-amino-1-(5-phospho-beta-D-ribosyl)imidazole-4-carboxamide + L-glutamate + H(+). Its pathway is amino-acid biosynthesis; L-histidine biosynthesis; L-histidine from 5-phospho-alpha-D-ribose 1-diphosphate: step 5/9. Its function is as follows. IGPS catalyzes the conversion of PRFAR and glutamine to IGP, AICAR and glutamate. The HisF subunit catalyzes the cyclization activity that produces IGP and AICAR from PRFAR using the ammonia provided by the HisH subunit. The protein is Imidazole glycerol phosphate synthase subunit HisF of Brucella melitensis biotype 2 (strain ATCC 23457).